The sequence spans 361 residues: Probable dual-specificity RNA methyltransferase RlmN (361 aa).

Glutamate 91 acts as the Proton acceptor in catalysis. The 233-residue stretch at 97–329 (QHYGLSVCVT…KKKGVNCVVR (233 aa)) folds into the Radical SAM core domain. An intrachain disulfide couples cysteine 104 to cysteine 340. Residues cysteine 111, cysteine 115, and cysteine 118 each coordinate [4Fe-4S] cluster. Residues 163 to 164 (GE), serine 195, 218 to 220 (SLH), and asparagine 296 contribute to the S-adenosyl-L-methionine site. The S-methylcysteine intermediate role is filled by cysteine 340.

Belongs to the radical SAM superfamily. RlmN family. [4Fe-4S] cluster serves as cofactor.

Its subcellular location is the cytoplasm. It carries out the reaction adenosine(2503) in 23S rRNA + 2 reduced [2Fe-2S]-[ferredoxin] + 2 S-adenosyl-L-methionine = 2-methyladenosine(2503) in 23S rRNA + 5'-deoxyadenosine + L-methionine + 2 oxidized [2Fe-2S]-[ferredoxin] + S-adenosyl-L-homocysteine. The enzyme catalyses adenosine(37) in tRNA + 2 reduced [2Fe-2S]-[ferredoxin] + 2 S-adenosyl-L-methionine = 2-methyladenosine(37) in tRNA + 5'-deoxyadenosine + L-methionine + 2 oxidized [2Fe-2S]-[ferredoxin] + S-adenosyl-L-homocysteine. Its function is as follows. Specifically methylates position 2 of adenine 2503 in 23S rRNA and position 2 of adenine 37 in tRNAs. This Streptococcus pneumoniae serotype 19F (strain G54) protein is Probable dual-specificity RNA methyltransferase RlmN.